The following is a 172-amino-acid chain: Large ribosomal subunit protein uL10 (172 aa).

The protein belongs to the universal ribosomal protein uL10 family. As to quaternary structure, part of the ribosomal stalk of the 50S ribosomal subunit. The N-terminus interacts with L11 and the large rRNA to form the base of the stalk. The C-terminus forms an elongated spine to which L12 dimers bind in a sequential fashion forming a multimeric L10(L12)X complex.

Functionally, forms part of the ribosomal stalk, playing a central role in the interaction of the ribosome with GTP-bound translation factors. The protein is Large ribosomal subunit protein uL10 of Bradyrhizobium sp. (strain ORS 278).